The sequence spans 420 residues: Tyrosine--tRNA ligase (420 aa).

Tyrosine 33 lines the L-tyrosine pocket. The short motif at 38-47 is the 'HIGH' region element; it reads PTGDSLHAGH. L-tyrosine contacts are provided by tyrosine 167 and glutamine 171. Residues 227–231 carry the 'KMSKS' region motif; that stretch reads KFGKS. ATP is bound at residue lysine 230. Positions 352–418 constitute an S4 RNA-binding domain; it reads PTIIDLLIGA…GKKNFAGVKY (67 aa).

This sequence belongs to the class-I aminoacyl-tRNA synthetase family. TyrS type 1 subfamily. Homodimer.

The protein localises to the cytoplasm. The enzyme catalyses tRNA(Tyr) + L-tyrosine + ATP = L-tyrosyl-tRNA(Tyr) + AMP + diphosphate + H(+). In terms of biological role, catalyzes the attachment of tyrosine to tRNA(Tyr) in a two-step reaction: tyrosine is first activated by ATP to form Tyr-AMP and then transferred to the acceptor end of tRNA(Tyr). The protein is Tyrosine--tRNA ligase of Corynebacterium diphtheriae (strain ATCC 700971 / NCTC 13129 / Biotype gravis).